The chain runs to 463 residues: Glutamate--tRNA ligase (463 aa).

A 'HIGH' region motif is present at residues 8-18 (PSPTGYLHIGG). The 'KMSKS' region signature appears at 236–240 (RLSKR). Position 239 (K239) interacts with ATP.

It belongs to the class-I aminoacyl-tRNA synthetase family. Glutamate--tRNA ligase type 1 subfamily. Monomer.

The protein localises to the cytoplasm. It catalyses the reaction tRNA(Glu) + L-glutamate + ATP = L-glutamyl-tRNA(Glu) + AMP + diphosphate. Catalyzes the attachment of glutamate to tRNA(Glu) in a two-step reaction: glutamate is first activated by ATP to form Glu-AMP and then transferred to the acceptor end of tRNA(Glu). The protein is Glutamate--tRNA ligase of Nitrosomonas europaea (strain ATCC 19718 / CIP 103999 / KCTC 2705 / NBRC 14298).